The primary structure comprises 500 residues: Aspartyl/glutamyl-tRNA(Asn/Gln) amidotransferase subunit B (500 aa).

The protein belongs to the GatB/GatE family. GatB subfamily. In terms of assembly, heterotrimer of A, B and C subunits.

It catalyses the reaction L-glutamyl-tRNA(Gln) + L-glutamine + ATP + H2O = L-glutaminyl-tRNA(Gln) + L-glutamate + ADP + phosphate + H(+). The enzyme catalyses L-aspartyl-tRNA(Asn) + L-glutamine + ATP + H2O = L-asparaginyl-tRNA(Asn) + L-glutamate + ADP + phosphate + 2 H(+). Its function is as follows. Allows the formation of correctly charged Asn-tRNA(Asn) or Gln-tRNA(Gln) through the transamidation of misacylated Asp-tRNA(Asn) or Glu-tRNA(Gln) in organisms which lack either or both of asparaginyl-tRNA or glutaminyl-tRNA synthetases. The reaction takes place in the presence of glutamine and ATP through an activated phospho-Asp-tRNA(Asn) or phospho-Glu-tRNA(Gln). This Clavibacter sepedonicus (Clavibacter michiganensis subsp. sepedonicus) protein is Aspartyl/glutamyl-tRNA(Asn/Gln) amidotransferase subunit B.